A 267-amino-acid chain; its full sequence is Cytochrome b (267 aa).

Transmembrane regions (helical) follow at residues 4-24 (FGSLLGICLMTQILTGLLLAA), 48-69 (WLIRNLHANGASFFFICIYLHI), 84-104 (WNTGVILLLTLMATAFVGYVL), and 149-169 (FFTLHFLLPFMIAGLTIIHLT). Positions 54 and 68 each coordinate heme b. His153 and His167 together coordinate heme b. Residue His172 coordinates a ubiquinone. The next 2 helical transmembrane spans lie at 197 to 217 (LKDILGFTLMFLPLMTLALFA) and 259 to 267 (LGGVLALAA).

It belongs to the cytochrome b family. As to quaternary structure, the cytochrome bc1 complex contains 11 subunits: 3 respiratory subunits (MT-CYB, CYC1 and UQCRFS1), 2 core proteins (UQCRC1 and UQCRC2) and 6 low-molecular weight proteins (UQCRH/QCR6, UQCRB/QCR7, UQCRQ/QCR8, UQCR10/QCR9, UQCR11/QCR10 and a cleavage product of UQCRFS1). This cytochrome bc1 complex then forms a dimer. Heme b serves as cofactor.

The protein localises to the mitochondrion inner membrane. Component of the ubiquinol-cytochrome c reductase complex (complex III or cytochrome b-c1 complex) that is part of the mitochondrial respiratory chain. The b-c1 complex mediates electron transfer from ubiquinol to cytochrome c. Contributes to the generation of a proton gradient across the mitochondrial membrane that is then used for ATP synthesis. The chain is Cytochrome b (MT-CYB) from Raphus cucullatus (Dodo).